Reading from the N-terminus, the 800-residue chain is DNA topoisomerase 4 subunit A (800 aa).

The 465-residue stretch at 31-495 (LPDVRDGLKP…EIEEIKIDKE (465 aa)) folds into the Topo IIA-type catalytic domain. The active-site O-(5'-phospho-DNA)-tyrosine intermediate is Tyr119.

This sequence belongs to the type II topoisomerase GyrA/ParC subunit family. ParC type 2 subfamily. Heterotetramer composed of ParC and ParE.

It is found in the cell membrane. The catalysed reaction is ATP-dependent breakage, passage and rejoining of double-stranded DNA.. Functionally, topoisomerase IV is essential for chromosome segregation. It relaxes supercoiled DNA. Performs the decatenation events required during the replication of a circular DNA molecule. This Staphylococcus aureus (strain MRSA252) protein is DNA topoisomerase 4 subunit A.